Consider the following 330-residue polypeptide: Biotin synthase (330 aa).

One can recognise a Radical SAM core domain in the interval 55 to 282 (NAVQRSTLLS…TAYVRLSAGR (228 aa)). Residues C70, C74, and C77 each contribute to the [4Fe-4S] cluster site. The [2Fe-2S] cluster site is built by C114, C145, C205, and R277.

It belongs to the radical SAM superfamily. Biotin synthase family. In terms of assembly, homodimer. [4Fe-4S] cluster is required as a cofactor. It depends on [2Fe-2S] cluster as a cofactor.

The catalysed reaction is (4R,5S)-dethiobiotin + (sulfur carrier)-SH + 2 reduced [2Fe-2S]-[ferredoxin] + 2 S-adenosyl-L-methionine = (sulfur carrier)-H + biotin + 2 5'-deoxyadenosine + 2 L-methionine + 2 oxidized [2Fe-2S]-[ferredoxin]. It functions in the pathway cofactor biosynthesis; biotin biosynthesis; biotin from 7,8-diaminononanoate: step 2/2. Its function is as follows. Catalyzes the conversion of dethiobiotin (DTB) to biotin by the insertion of a sulfur atom into dethiobiotin via a radical-based mechanism. The polypeptide is Biotin synthase (Methylibium petroleiphilum (strain ATCC BAA-1232 / LMG 22953 / PM1)).